We begin with the raw amino-acid sequence, 499 residues long: Guanosine-5'-triphosphate,3'-diphosphate pyrophosphatase (499 aa).

This sequence belongs to the GppA/Ppx family. GppA subfamily.

The catalysed reaction is guanosine 3'-diphosphate 5'-triphosphate + H2O = guanosine 3',5'-bis(diphosphate) + phosphate + H(+). Its pathway is purine metabolism; ppGpp biosynthesis; ppGpp from GTP: step 2/2. Functionally, catalyzes the conversion of pppGpp to ppGpp. Guanosine pentaphosphate (pppGpp) is a cytoplasmic signaling molecule which together with ppGpp controls the 'stringent response', an adaptive process that allows bacteria to respond to amino acid starvation, resulting in the coordinated regulation of numerous cellular activities. The polypeptide is Guanosine-5'-triphosphate,3'-diphosphate pyrophosphatase (Klebsiella pneumoniae (strain 342)).